Here is a 254-residue protein sequence, read N- to C-terminus: HTH-type transcriptional repressor DasR (254 aa).

An HTH gntR-type domain is found at 17–87 (RTARVPKYYR…QGKGTFVAKP (71 aa)). Residues 47-66 (ERTLAAEFDTSRTTVRQALQ) constitute a DNA-binding region (H-T-H motif).

It localises to the cytoplasm. With respect to regulation, binding to the target genes is abolished by GlcN6P, a central molecule in N-acetylglucosamine metabolism. Global regulator that is part of the nutrient-sensing system. In the absence of glucosamine 6-P (GlcN6P), represses the phosphotransferase system (PTS) specific for the uptake of N-acetylglucosamine (PTSNag), and genes involved in the metabolism of chitin, as well as several genes involved in development, thereby linking carbon availability to morphogenesis. Also regulates the expression of the ABC transporters DasABC and NgcEFG, which are involved in N,N'-diacetylchitobiose ((GlcNAc)2) uptake. Binds to the DNA consensus sequence 5'-ACTGGTCTAGACCACT-3'. The chain is HTH-type transcriptional repressor DasR (dasR) from Streptomyces coelicolor (strain ATCC BAA-471 / A3(2) / M145).